A 425-amino-acid polypeptide reads, in one-letter code: Enolase (425 aa).

Glutamine 163 provides a ligand contact to (2R)-2-phosphoglycerate. Residue glutamate 205 is the Proton donor of the active site. 3 residues coordinate Mg(2+): aspartate 242, glutamate 285, and aspartate 312. 4 residues coordinate (2R)-2-phosphoglycerate: lysine 337, arginine 366, serine 367, and lysine 388. Catalysis depends on lysine 337, which acts as the Proton acceptor.

This sequence belongs to the enolase family. Requires Mg(2+) as cofactor.

It is found in the cytoplasm. The protein localises to the secreted. The protein resides in the cell surface. The catalysed reaction is (2R)-2-phosphoglycerate = phosphoenolpyruvate + H2O. It functions in the pathway carbohydrate degradation; glycolysis; pyruvate from D-glyceraldehyde 3-phosphate: step 4/5. Its function is as follows. Catalyzes the reversible conversion of 2-phosphoglycerate (2-PG) into phosphoenolpyruvate (PEP). It is essential for the degradation of carbohydrates via glycolysis. The chain is Enolase from Paracoccus denitrificans (strain Pd 1222).